The primary structure comprises 1246 residues: Superkiller complex protein 2 (1246 aa).

The interval 220-246 is disordered; it reads LGGGDEDENEAVGQPGGPRGDTVSASP. Phosphoserine occurs at positions 245 and 256. A Helicase ATP-binding domain is found at 319–475; sequence ILHLERHDSV…WIGRLKRRQI (157 aa). 332-339 serves as a coordination point for ATP; the sequence is AHTSAGKT. Positions 423–426 match the DEVH box motif; the sequence is DEVH. The Helicase C-terminal domain occupies 585–755; that stretch reads GLTSLDLTTS…LTYTMILNLL (171 aa).

It belongs to the helicase family. SKI2 subfamily. In terms of assembly, component of the SKI complex which consists of SKIC2, SKIC3 and SKIC8. Interacts with HBS1L isoform 2.

It localises to the nucleus. It is found in the cytoplasm. The enzyme catalyses ATP + H2O = ADP + phosphate + H(+). Functionally, helicase component of the SKI complex, a multiprotein complex that assists the RNA-degrading exosome during the mRNA decay and quality-control pathways. The SKI complex catalyzes mRNA extraction from 80S ribosomal complexes in the 3'-5' direction and channels mRNA to the cytosolic exosome for degradation. SKI-mediated extraction of mRNA from stalled ribosomes allow binding of the Pelota-HBS1L complex and subsequent ribosome disassembly by ABCE1 for ribosome recycling. In the nucleus, the SKI complex associates with transcriptionally active genes in a manner dependent on PAF1 complex (PAF1C). This chain is Superkiller complex protein 2, found in Homo sapiens (Human).